The following is a 57-amino-acid chain: Large ribosomal subunit protein uL30 (57 aa).

It belongs to the universal ribosomal protein uL30 family. Part of the 50S ribosomal subunit.

In Maridesulfovibrio salexigens (strain ATCC 14822 / DSM 2638 / NCIMB 8403 / VKM B-1763) (Desulfovibrio salexigens), this protein is Large ribosomal subunit protein uL30.